The chain runs to 999 residues: Probable basic-leucine zipper transcription factor N (999 aa).

Composition is skewed to low complexity over residues 1–79 (MYQS…YQQQ) and 88–126 (NNVN…INNN). The interval 1–126 (MYQSIPQQGN…NNNNGNINNN (126 aa)) is disordered. Coiled coils occupy residues 148-198 (QQQQ…MVLM) and 232-282 (GIQQ…QQIS). Residues 286–302 (ESASPYYSTPIQSNTML) show a composition bias toward polar residues. Disordered regions lie at residues 286–406 (ESAS…SQDQ), 450–533 (QQLH…PTIN), and 601–620 (EKQK…NYRQ). Low complexity predominate over residues 303–347 (SIPSSPGIPSSIPQLNNSNNINNNSNNNNNNNNNNNNNNINYNSN). Polar residues predominate over residues 348–406 (MASNFISQHSNNGSNTSSPVPQTTYLQNSGGNFNAYNGSNTNSPITPSSYLQPTTSQDQ). Residues 423-451 (IQQQQKILQQQQQQQLLLQQQIQQQQQQQ) are a coiled coil. Residues 450-517 (QQLHQPQSPQ…IIQPTTIQPQ (68 aa)) are compositionally biased toward low complexity. The region spanning 601 to 664 (EKQKTRRRAS…KKLLHENNIL (64 aa)) is the bZIP domain. The interval 602–632 (KQKTRRRASQNLASRNYRQRKKQYVNEVEDR) is basic motif. The interval 636 to 643 (IVQENERL) is leucine-zipper. 3 disordered regions span residues 665-711 (KSGG…VVET), 779-807 (QSCP…SPYE), and 870-899 (VNNG…TTTT). Residues 682–692 (SEDEDEDDFDQ) show a composition bias toward acidic residues. A coiled-coil region spans residues 921 to 950 (HLVQLSGLLDKLKENIDHENETLIQTYEKL).

The protein belongs to the bZIP family.

It localises to the nucleus. Probable transcriptional regulator. This chain is Probable basic-leucine zipper transcription factor N (bzpN), found in Dictyostelium discoideum (Social amoeba).